A 247-amino-acid chain; its full sequence is D-alanyl-D-alanine dipeptidase (247 aa).

Residues His140 and Asp147 each contribute to the Zn(2+) site. Glu215 functions as the Proton donor/acceptor in the catalytic mechanism. His218 is a Zn(2+) binding site.

It belongs to the peptidase M15D family. Requires Zn(2+) as cofactor.

The protein localises to the cytoplasm. It catalyses the reaction D-alanyl-D-alanine + H2O = 2 D-alanine. Functionally, catalyzes hydrolysis of the D-alanyl-D-alanine dipeptide. May have a role in cell-wall turnover. In Synechocystis sp. (strain ATCC 27184 / PCC 6803 / Kazusa), this protein is D-alanyl-D-alanine dipeptidase.